Reading from the N-terminus, the 39-residue chain is Omega-theraphotoxin-Asp1g (39 aa).

Disulfide bonds link C4–C25, C8–C31, and C17–C36.

The protein belongs to the neurotoxin 12 (Hwtx-2) family. 06 (TXP1) subfamily. As to expression, expressed by the venom gland.

It localises to the secreted. Functionally, inhibits voltage-gated calcium channels (Cav) in rat cerebellar granule cells. Has insecticidal activity. The protein is Omega-theraphotoxin-Asp1g of Aphonopelma sp. (American tarantula).